A 161-amino-acid polypeptide reads, in one-letter code: Large ribosomal subunit protein uL16 (161 aa).

This sequence belongs to the universal ribosomal protein uL16 family.

The polypeptide is Large ribosomal subunit protein uL16 (Methanosphaera stadtmanae (strain ATCC 43021 / DSM 3091 / JCM 11832 / MCB-3)).